A 1072-amino-acid chain; its full sequence is Carbamoyl phosphate synthase large chain (1072 aa).

The interval 1–401 (MPKRLDINTI…SLLKAVRSLE (401 aa)) is carboxyphosphate synthetic domain. Arg-129, Arg-169, Gly-175, Gly-176, Lys-208, Ile-210, Glu-215, Gly-241, Val-242, His-243, Gln-284, and Glu-298 together coordinate ATP. Residues 133–327 (RTLMQDLNEP…IAKLAAKIAV (195 aa)) form the ATP-grasp 1 domain. The Mg(2+) site is built by Gln-284, Glu-298, and Asn-300. The Mn(2+) site is built by Gln-284, Glu-298, and Asn-300. The tract at residues 402 to 546 (LGIYHLELDH…YSTYADENES (145 aa)) is oligomerization domain. A carbamoyl phosphate synthetic domain region spans residues 547-929 (IVTDRKSVVV…ALYKGLVASG (383 aa)). Positions 671-861 (EAALTKLGIP…MANVATKVIL (191 aa)) constitute an ATP-grasp 2 domain. ATP contacts are provided by Arg-707, Arg-746, Glu-752, Gly-777, Val-778, His-779, Ser-780, Gln-820, and Glu-832. Mg(2+) contacts are provided by Gln-820, Glu-832, and Asn-834. Mn(2+) is bound by residues Gln-820, Glu-832, and Asn-834. Residues 930–1072 (INIPTHGSVI…QTKRHEVVHA (143 aa)) form the MGS-like domain. The tract at residues 930–1072 (INIPTHGSVI…QTKRHEVVHA (143 aa)) is allosteric domain.

The protein belongs to the CarB family. In terms of assembly, composed of two chains; the small (or glutamine) chain promotes the hydrolysis of glutamine to ammonia, which is used by the large (or ammonia) chain to synthesize carbamoyl phosphate. Tetramer of heterodimers (alpha,beta)4. The cofactor is Mg(2+). It depends on Mn(2+) as a cofactor.

The catalysed reaction is hydrogencarbonate + L-glutamine + 2 ATP + H2O = carbamoyl phosphate + L-glutamate + 2 ADP + phosphate + 2 H(+). It carries out the reaction hydrogencarbonate + NH4(+) + 2 ATP = carbamoyl phosphate + 2 ADP + phosphate + 2 H(+). Its pathway is amino-acid biosynthesis; L-arginine biosynthesis; carbamoyl phosphate from bicarbonate: step 1/1. It functions in the pathway pyrimidine metabolism; UMP biosynthesis via de novo pathway; (S)-dihydroorotate from bicarbonate: step 1/3. Large subunit of the glutamine-dependent carbamoyl phosphate synthetase (CPSase). CPSase catalyzes the formation of carbamoyl phosphate from the ammonia moiety of glutamine, carbonate, and phosphate donated by ATP, constituting the first step of 2 biosynthetic pathways, one leading to arginine and/or urea and the other to pyrimidine nucleotides. The large subunit (synthetase) binds the substrates ammonia (free or transferred from glutamine from the small subunit), hydrogencarbonate and ATP and carries out an ATP-coupled ligase reaction, activating hydrogencarbonate by forming carboxy phosphate which reacts with ammonia to form carbamoyl phosphate. The sequence is that of Carbamoyl phosphate synthase large chain from Bacillus cereus (strain ATCC 14579 / DSM 31 / CCUG 7414 / JCM 2152 / NBRC 15305 / NCIMB 9373 / NCTC 2599 / NRRL B-3711).